The following is a 262-amino-acid chain: TLC domain-containing protein 4-B (262 aa).

A run of 6 helical transmembrane segments spans residues 6 to 26, 53 to 73, 90 to 110, 122 to 142, 177 to 197, and 218 to 238; these read PLTVFISVTSLAVFQFLFHVG, TVSSFHALVVGCFCLYILVYD, LNVAVTSGYLISDLLLIIYYW, HLAALYACYYVLGEGMLPYFG, GVLMTISFFIVRIAVIPIYYG, and AWIISSVSLDIMNVMWMIKIA. Positions 44-246 constitute a TLC domain; sequence RQKIEWNSRT…IAKGCYKVLY (203 aa).

It belongs to the TLCD4 family.

The protein resides in the membrane. This chain is TLC domain-containing protein 4-B (tlcd4-b), found in Xenopus laevis (African clawed frog).